A 381-amino-acid polypeptide reads, in one-letter code: tRNA (guanine(26)-N(2))-dimethyltransferase (381 aa).

A Trm1 methyltransferase domain is found at 7–378 (IEVQEGKAKI…APYEVFIETI (372 aa)). 5 residues coordinate S-adenosyl-L-methionine: arginine 39, arginine 64, aspartate 81, aspartate 123, and alanine 124.

It belongs to the class I-like SAM-binding methyltransferase superfamily. Trm1 family.

It carries out the reaction guanosine(26) in tRNA + 2 S-adenosyl-L-methionine = N(2)-dimethylguanosine(26) in tRNA + 2 S-adenosyl-L-homocysteine + 2 H(+). Dimethylates a single guanine residue at position 26 of a number of tRNAs using S-adenosyl-L-methionine as donor of the methyl groups. This is tRNA (guanine(26)-N(2))-dimethyltransferase from Pyrococcus horikoshii (strain ATCC 700860 / DSM 12428 / JCM 9974 / NBRC 100139 / OT-3).